Consider the following 164-residue polypeptide: MDATYEELERNDIKGPQEAELLTHAYAGFWVRFWAFLLDWLVIWGLNHLLVSPLFTVLDLPKTSGMFTFSAYSVTTLIVYLAYFALMTKYFRQTLGKMVFGLKVVSVKQDSKLTWSTVIFREVVGRYIDKIWILYIVVAFSPTKQGIHDYIADTTVVHEKLYRK.

An RDD domain is found at 26–158; the sequence is YAGFWVRFWA…DYIADTTVVH (133 aa). 2 helical membrane passes run 35–55 and 66–86; these read AFLL…SPLF and MFTF…YFAL.

It localises to the cell membrane. This is an uncharacterized protein from Bacillus subtilis (strain 168).